The following is a 1913-amino-acid chain: Protein TIC 214 (1913 aa).

5 consecutive transmembrane segments (helical) span residues 18 to 38 (IINS…FSIG), 64 to 84 (FITG…HLAL), 124 to 144 (LSIQ…HLML), 172 to 192 (VGWL…VSWI), and 214 to 234 (LKSA…VNYL). 3 disordered regions span residues 245 to 330 (KLNE…ETEE), 707 to 734 (YTDK…NSDT), and 1605 to 1652 (EKED…RKKK). The span at 260–289 (KESQKSKESEEERDVEKETTSETKETKQEQ) shows a compositional bias: basic and acidic residues. Residues 303–314 (EKEDPDKIDETE) show a composition bias toward acidic residues. Over residues 315–330 (EIRVNGKEKKKDETEE) the composition is skewed to basic and acidic residues. Residues 718–729 (PNPNTDNTTTEN) show a composition bias toward low complexity.

This sequence belongs to the TIC214 family. Part of the Tic complex.

It localises to the plastid. Its subcellular location is the chloroplast inner membrane. Involved in protein precursor import into chloroplasts. May be part of an intermediate translocation complex acting as a protein-conducting channel at the inner envelope. The protein is Protein TIC 214 of Acorus calamus var. americanus (American sweet flag).